We begin with the raw amino-acid sequence, 1018 residues long: Isoleucine--tRNA ligase (1018 aa).

Residues 43 to 53 (PYTTGRIHLGT) carry the 'HIGH' region motif. The short motif at 586-590 (KMSKS) is the 'KMSKS' region element. Lysine 589 contributes to the ATP binding site.

The protein belongs to the class-I aminoacyl-tRNA synthetase family. IleS type 2 subfamily. As to quaternary structure, monomer. It depends on Zn(2+) as a cofactor.

It is found in the cytoplasm. The catalysed reaction is tRNA(Ile) + L-isoleucine + ATP = L-isoleucyl-tRNA(Ile) + AMP + diphosphate. Its function is as follows. Catalyzes the attachment of isoleucine to tRNA(Ile). As IleRS can inadvertently accommodate and process structurally similar amino acids such as valine, to avoid such errors it has two additional distinct tRNA(Ile)-dependent editing activities. One activity is designated as 'pretransfer' editing and involves the hydrolysis of activated Val-AMP. The other activity is designated 'posttransfer' editing and involves deacylation of mischarged Val-tRNA(Ile). The chain is Isoleucine--tRNA ligase from Archaeoglobus fulgidus (strain ATCC 49558 / DSM 4304 / JCM 9628 / NBRC 100126 / VC-16).